A 116-amino-acid chain; its full sequence is Large ribosomal subunit protein bL19 (116 aa).

This sequence belongs to the bacterial ribosomal protein bL19 family.

This protein is located at the 30S-50S ribosomal subunit interface and may play a role in the structure and function of the aminoacyl-tRNA binding site. This is Large ribosomal subunit protein bL19 from Pseudomonas savastanoi pv. phaseolicola (strain 1448A / Race 6) (Pseudomonas syringae pv. phaseolicola (strain 1448A / Race 6)).